Reading from the N-terminus, the 412-residue chain is Multifunctional CCA protein (412 aa).

Gly8 and Arg11 together coordinate ATP. Residues Gly8 and Arg11 each coordinate CTP. Mg(2+) is bound by residues Asp21 and Asp23. 3 residues coordinate ATP: Arg91, Arg137, and Arg140. The CTP site is built by Arg91, Arg137, and Arg140. The 102-residue stretch at 228 to 329 folds into the HD domain; sequence TGIHTLMTLS…VKLFDSIDAW (102 aa).

The protein belongs to the tRNA nucleotidyltransferase/poly(A) polymerase family. Bacterial CCA-adding enzyme type 1 subfamily. As to quaternary structure, monomer. Can also form homodimers and oligomers. Requires Mg(2+) as cofactor. The cofactor is Ni(2+).

The catalysed reaction is a tRNA precursor + 2 CTP + ATP = a tRNA with a 3' CCA end + 3 diphosphate. The enzyme catalyses a tRNA with a 3' CCA end + 2 CTP + ATP = a tRNA with a 3' CCACCA end + 3 diphosphate. In terms of biological role, catalyzes the addition and repair of the essential 3'-terminal CCA sequence in tRNAs without using a nucleic acid template. Adds these three nucleotides in the order of C, C, and A to the tRNA nucleotide-73, using CTP and ATP as substrates and producing inorganic pyrophosphate. tRNA 3'-terminal CCA addition is required both for tRNA processing and repair. Also involved in tRNA surveillance by mediating tandem CCA addition to generate a CCACCA at the 3' terminus of unstable tRNAs. While stable tRNAs receive only 3'-terminal CCA, unstable tRNAs are marked with CCACCA and rapidly degraded. This chain is Multifunctional CCA protein, found in Escherichia coli O81 (strain ED1a).